The sequence spans 581 residues: Frizzled-10 (581 aa).

An N-terminal signal peptide occupies residues 1–20 (MQRPGPRLWLVLQVMGSCAA). Residues 21–225 (ISSMDMERPG…DVYWSREDKR (205 aa)) are Extracellular-facing. Positions 29–150 (PGDGKCQPIE…NDPNYLCMEA (122 aa)) constitute an FZ domain. 5 disulfides stabilise this stretch: Cys-34/Cys-95, Cys-42/Cys-88, Cys-79/Cys-117, Cys-106/Cys-147, and Cys-110/Cys-134. A glycan (N-linked (GlcNAc...) asparagine) is linked at Asn-48. Residue Asn-153 is glycosylated (N-linked (GlcNAc...) asparagine). A helical membrane pass occupies residues 226-246 (FAVVWLAIWAVLCFFSSAFTV). The Cytoplasmic segment spans residues 247-262 (LTFLIDPARFRYPERP). A helical transmembrane segment spans residues 263–283 (IIFLSMCYCVYSVGYLIRLFA). Residues 284–311 (GAESIACDRDSGQLYVIQEGLESTGCTL) are Extracellular-facing. A helical transmembrane segment spans residues 312-332 (VFLVLYYFGMASSLWWVVLTL). The Cytoplasmic portion of the chain corresponds to 333–351 (TWFLAAGKKWGHEAIEANS). The chain crosses the membrane as a helical span at residues 352–372 (SYFHLAAWAIPAVKTILILVM). Residues 373 to 393 (RRVAGDELTGVCYVGSMDVNA) are Extracellular-facing. Residues 394-414 (LTGFVLIPLACYLVIGTSFIL) traverse the membrane as a helical segment. Over 415-443 (SGFVALFHIRRVMKTGGENTDKLEKLMVR) the chain is Cytoplasmic. A helical membrane pass occupies residues 444–464 (IGLFSVLYTVPATCVIACYFY). At 465 to 502 (ERLNMDYWKILAAQHKCKMNNQTKTLDCLMAASIPAVE) the chain is on the extracellular side. N-linked (GlcNAc...) asparagine glycosylation occurs at Asn-485. Residues 503–523 (IFMVKIFMLLVVGITSGMWIW) traverse the membrane as a helical segment. The Cytoplasmic portion of the chain corresponds to 524–581 (TSKTLQSWQQVCSRRLKKKSRRKPASVITSGGIYKKAQHPQKTHHGKYEIPAQSPTCV). The Lys-Thr-X-X-X-Trp motif, mediates interaction with the PDZ domain of Dvl family members signature appears at 526 to 531 (KTLQSW). Positions 560–581 (AQHPQKTHHGKYEIPAQSPTCV) are disordered. Positions 579-581 (TCV) match the PDZ-binding motif.

It belongs to the G-protein coupled receptor Fz/Smo family. As to quaternary structure, interacts with WNT7B. Interacts with MYOC. Ubiquitinated by ZNRF3, leading to its degradation by the proteasome. In terms of tissue distribution, highest levels in the placenta and fetal kidney, followed by fetal lung and brain. In adult brain, abundantly expressed in the cerebellum, followed by cerebral cortex, medulla and spinal cord; very low levels in total brain, frontal lobe, temporal lobe and putamen. Weak expression detected in adult brain, heart, lung, skeletal muscle, pancreas, spleen and prostate.

It is found in the cell membrane. Receptor for Wnt proteins. Functions in the canonical Wnt/beta-catenin signaling pathway. The canonical Wnt/beta-catenin signaling pathway leads to the activation of disheveled proteins, inhibition of GSK-3 kinase, nuclear accumulation of beta-catenin and activation of Wnt target genes. A second signaling pathway involving PKC and calcium fluxes has been seen for some family members, but it is not yet clear if it represents a distinct pathway or if it can be integrated in the canonical pathway, as PKC seems to be required for Wnt-mediated inactivation of GSK-3 kinase. Both pathways seem to involve interactions with G-proteins. May be involved in transduction and intercellular transmission of polarity information during tissue morphogenesis and/or in differentiated tissues. The sequence is that of Frizzled-10 (FZD10) from Homo sapiens (Human).